Consider the following 167-residue polypeptide: Small ribosomal subunit protein uS9 (167 aa).

A disordered region spans residues 1 to 41 (MNTEAVAPDVAEEEVLTSYTSESSASADDAPKKERPALTVS). The segment covering 17–26 (TSYTSESSAS) has biased composition (polar residues).

It belongs to the universal ribosomal protein uS9 family.

In Renibacterium salmoninarum (strain ATCC 33209 / DSM 20767 / JCM 11484 / NBRC 15589 / NCIMB 2235), this protein is Small ribosomal subunit protein uS9.